The following is a 257-amino-acid chain: Fimbrial assembly protein, serogroup E1 (257 aa).

The polypeptide is Fimbrial assembly protein, serogroup E1 (fimB) (Dichelobacter nodosus (Bacteroides nodosus)).